Here is a 305-residue protein sequence, read N- to C-terminus: MSIPSGTEPQIKRFSVTADPDTIFQAYQEDGVVIIQGFLSPEQLDKFNREVNPRLAHQRQGYQPSLKARLMEGSLSALLPPQQKRVHNLAGFSKVFRHDILNHGLMHELCRRAFAATGDYWLSSGAVIENGPGTPEQGWHRDQPSYPVIQAGPGTAEGMVNFFTALTDFTAEAGATQFMHGSHKVVGIPDGDPNHPMLIAEMKAGDSVLLSGKLVHRGGLNNTSDFFRRALSLAISPCVLTPYESSIHLSRPLVESMTPLAQRMIAWRSASIPPPYQIGMWTLNMNEVGEEMGLKYNQPYDEDEE.

3 residues coordinate Fe cation: H140, D142, and H216.

Belongs to the PhyH family. Requires Fe cation as cofactor.

It participates in secondary metabolite biosynthesis. In terms of biological role, dioxygenase; part of the gene cluster that mediates the biosynthesis of hancockiamides, an unusual new family of N-cinnamoylated piperazines. The NRPS hkm10 and the NmrA-like reductase hkm9 are proposed to convert two molecules of L-Phe to the intermediary piperazine called xenocockiamide A. Xenocockiamide A is then converted to hancockiamide D via a series of hydroxylations and O-methylations. The tyrosinase hkm6 may catalyze an aromatic hydroxylation, then the 2-oxoglutarate-dependent Fe(II) dioxygenase hkm4 and the FAD-dependent phenol hydroxylase hkm7 may catalyze consecutive hydroxylations to install 2 more hydroxy groups, and the methyltransferase hkm8 probably catalyzes two methylations using 2 molecules of S-adenosyl-L-methionine (SAM). The NRPS hkm11 activates and transfers trans-cinnamate supplied by the PAL hkm12 to hancockiamide D and produces hancockiamide A. NRPS Hkm11 has the flexibility to tolerate the bulky hancockiamide G as a substrate and the absence of the acetyl-transferase hkm3 opens up the opportunity for hkm11 to introduce a second N-cinnamoyl moiety. The cytochrome P450 monooxygenase hkm5 catalyzes the methylenedioxy bridge formation, converting hancockiamide A into hancockiamide G. Hkm5 can also convert hancockiamide B into hancockiamide C, and hancockiamide D into hancockiamide H. The N-acetyltransferase hkm3 finally transfers an acetyl group to 1-N of piperazine, converting hancockiamide A into hancockiamide B and hancockiamide G into hancockiamide C. This is Dioxygenase hkm4 from Aspergillus hancockii.